The primary structure comprises 279 residues: uncharacterized protein (279 aa).

The region spanning 14–71 is the HTH lysR-type domain; that stretch reads ITPNQIKLLIALHKTKSQNEAAKLLNIKPSSFNIQLKRLENKLGVKLYYSSPNGTVLT. Residues 31 to 50 constitute a DNA-binding region (H-T-H motif); it reads QNEAAKLLNIKPSSFNIQLK.

Belongs to the LysR transcriptional regulatory family.

This is an uncharacterized protein from Methanocaldococcus jannaschii (strain ATCC 43067 / DSM 2661 / JAL-1 / JCM 10045 / NBRC 100440) (Methanococcus jannaschii).